Consider the following 81-residue polypeptide: ATP synthase subunit c, chloroplastic (81 aa).

Transmembrane regions (helical) follow at residues 7-27 (AASVIAAGLAVGLASIGPGVG) and 57-77 (LAFMEALTIYGLVVALALLFA).

Belongs to the ATPase C chain family. In terms of assembly, F-type ATPases have 2 components, F(1) - the catalytic core - and F(0) - the membrane proton channel. F(1) has five subunits: alpha(3), beta(3), gamma(1), delta(1), epsilon(1). F(0) has four main subunits: a(1), b(1), b'(1) and c(10-14). The alpha and beta chains form an alternating ring which encloses part of the gamma chain. F(1) is attached to F(0) by a central stalk formed by the gamma and epsilon chains, while a peripheral stalk is formed by the delta, b and b' chains.

Its subcellular location is the plastid. The protein resides in the chloroplast thylakoid membrane. F(1)F(0) ATP synthase produces ATP from ADP in the presence of a proton or sodium gradient. F-type ATPases consist of two structural domains, F(1) containing the extramembraneous catalytic core and F(0) containing the membrane proton channel, linked together by a central stalk and a peripheral stalk. During catalysis, ATP synthesis in the catalytic domain of F(1) is coupled via a rotary mechanism of the central stalk subunits to proton translocation. Its function is as follows. Key component of the F(0) channel; it plays a direct role in translocation across the membrane. A homomeric c-ring of between 10-14 subunits forms the central stalk rotor element with the F(1) delta and epsilon subunits. In Arabis hirsuta (Hairy rock-cress), this protein is ATP synthase subunit c, chloroplastic.